The chain runs to 1357 residues: DNA-directed RNA polymerase subunit beta (1357 aa).

This sequence belongs to the RNA polymerase beta chain family. The RNAP catalytic core consists of 2 alpha, 1 beta, 1 beta' and 1 omega subunit. When a sigma factor is associated with the core the holoenzyme is formed, which can initiate transcription.

The enzyme catalyses RNA(n) + a ribonucleoside 5'-triphosphate = RNA(n+1) + diphosphate. DNA-dependent RNA polymerase catalyzes the transcription of DNA into RNA using the four ribonucleoside triphosphates as substrates. In Pseudomonas putida (Arthrobacter siderocapsulatus), this protein is DNA-directed RNA polymerase subunit beta.